Here is an 89-residue protein sequence, read N- to C-terminus: Protein M7 (89 aa).

Residues Met-1 to Ser-25 form the signal peptide. 4 disulfides stabilise this stretch: Cys-28-Cys-65, Cys-38-Cys-54, Cys-55-Cys-80, and Cys-67-Cys-87.

It belongs to the A9/FIL1 family. Tapetum of anthers.

Its subcellular location is the secreted. The chain is Protein M7 (M7) from Lilium henryi (Henry's lily).